The chain runs to 285 residues: uncharacterized protein (285 aa).

A run of 7 helical transmembrane segments spans residues 6-26, 38-58, 84-104, 110-130, 153-173, 176-196, and 236-256; these read YLVV…TPLI, VFAA…YIFP, IFLL…IFLR, GVLA…ELIF, FMMH…DDGF, ISFF…ALMV, and LIFG…TVLV.

The protein resides in the cell membrane. This is an uncharacterized protein from Mycoplasma pneumoniae (strain ATCC 29342 / M129 / Subtype 1) (Mycoplasmoides pneumoniae).